The following is an 86-amino-acid chain: Small ribosomal subunit protein bS20 (86 aa).

The interval 1–25 is disordered; sequence MANIKSQIKRNKQNEKRHERNKAVK. The span at 12–22 shows a compositional bias: basic and acidic residues; that stretch reads KQNEKRHERNK.

The protein belongs to the bacterial ribosomal protein bS20 family.

Its function is as follows. Binds directly to 16S ribosomal RNA. This is Small ribosomal subunit protein bS20 from Nocardioides sp. (strain ATCC BAA-499 / JS614).